The sequence spans 382 residues: Beta-1,4-galactosyltransferase 6 (382 aa).

The Cytoplasmic segment spans residues 1-14 (MSVLRRMMRVSNRS). Residues 15–35 (LLAFIFFFSLSSSCLYFIYVA) traverse the membrane as a helical; Signal-anchor for type II membrane protein segment. Over 36 to 382 (PGIANTYLFM…MPELAPIEDY (347 aa)) the chain is Lumenal. 6 N-linked (GlcNAc...) asparagine glycosylation sites follow: asparagine 71, asparagine 75, asparagine 83, asparagine 84, asparagine 99, and asparagine 122. A disulfide bond links cysteine 108 and cysteine 152. UDP-alpha-D-galactose contacts are provided by residues 163-167 (PFRNR), 202-204 (FNR), 229-230 (VD), tyrosine 258, and tryptophan 290. Residues cysteine 223 and cysteine 242 are joined by a disulfide bond. A Mn(2+)-binding site is contributed by aspartate 230. 292–295 (GEDD) contacts N-acetyl-D-glucosamine. The N-linked (GlcNAc...) asparagine glycan is linked to asparagine 307. Mn(2+) is bound at residue histidine 323. UDP-alpha-D-galactose is bound at residue 323–324 (HH). Arginine 334 contributes to the N-acetyl-D-glucosamine binding site. Asparagine 367 carries an N-linked (GlcNAc...) asparagine glycan.

Belongs to the glycosyltransferase 7 family. It depends on Mn(2+) as a cofactor. Mg(2+) serves as cofactor. High expression in brain and adrenal gland, lower in liver, lung, colon and peripheral white blood cells.

It is found in the golgi apparatus. The protein resides in the golgi stack membrane. The catalysed reaction is a beta-D-glucosyl-(1&lt;-&gt;1')-N-acylsphing-4-enine + UDP-alpha-D-galactose = a beta-D-Gal-(1-&gt;4)-beta-D-Glc-(1&lt;-&gt;1)-Cer(d18:1(4E)) + UDP + H(+). It functions in the pathway protein modification; protein glycosylation. Its pathway is sphingolipid metabolism. Inhibited by EDTA. Functionally, catalyzes the synthesis of lactosylceramide (LacCer) via the transfer of galactose from UDP-galactose to glucosylceramide (GlcCer). LacCer is the starting point in the biosynthesis of all gangliosides (membrane-bound glycosphingolipids) which play pivotal roles in the CNS including neuronal maturation and axonal and myelin formation. In Homo sapiens (Human), this protein is Beta-1,4-galactosyltransferase 6.